The chain runs to 345 residues: NADH-quinone oxidoreductase subunit H 1 (345 aa).

The next 9 helical transmembrane spans lie at 11-31 (IILT…ISLL), 50-70 (PNVV…KYIF), 84-104 (FFLA…VIPF), 115-135 (VAIL…IMGG), 161-181 (LGLI…SHIV), 187-207 (AFGL…LFFI), 248-268 (YIAI…GWLS), 277-297 (VFWM…VKAI), and 309-329 (IGWK…AFLA).

Belongs to the complex I subunit 1 family. NDH-1 is composed of 14 different subunits. Subunits NuoA, H, J, K, L, M, N constitute the membrane sector of the complex.

It is found in the cell inner membrane. It catalyses the reaction a quinone + NADH + 5 H(+)(in) = a quinol + NAD(+) + 4 H(+)(out). NDH-1 shuttles electrons from NADH, via FMN and iron-sulfur (Fe-S) centers, to quinones in the respiratory chain. The immediate electron acceptor for the enzyme in this species is believed to be ubiquinone. Couples the redox reaction to proton translocation (for every two electrons transferred, four hydrogen ions are translocated across the cytoplasmic membrane), and thus conserves the redox energy in a proton gradient. This subunit may bind ubiquinone. This chain is NADH-quinone oxidoreductase subunit H 1, found in Cereibacter sphaeroides (strain ATCC 17023 / DSM 158 / JCM 6121 / CCUG 31486 / LMG 2827 / NBRC 12203 / NCIMB 8253 / ATH 2.4.1.) (Rhodobacter sphaeroides).